We begin with the raw amino-acid sequence, 116 residues long: UPF0342 protein CTC_01059 (116 aa).

It belongs to the UPF0342 family.

The polypeptide is UPF0342 protein CTC_01059 (Clostridium tetani (strain Massachusetts / E88)).